The following is a 1531-amino-acid chain: Multidrug resistance-associated protein 1 (1531 aa).

Topologically, residues 1 to 33 (MALRGFCSADGSDPLWDWNVTWYTSNPDFTKCF) are extracellular. N19 carries an N-linked (GlcNAc...) asparagine glycan. The chain crosses the membrane as a helical span at residues 34–54 (QNTVLVWVPCFYLWACFPFYF). Residues 55-74 (LYLSRHDRGYIQMTLLNKTK) lie on the Cytoplasmic side of the membrane. A helical transmembrane segment spans residues 75-95 (TALGFLLWIVCWADLFYSFWE). The Extracellular portion of the chain corresponds to 96–100 (RSRGI). Residues 101–121 (FLAPVFLVSPTLLGITMLLAT) form a helical membrane-spanning segment. At 122-133 (FLIQLERRKGVQ) the chain is on the cytoplasmic side. Residues 134 to 154 (SSGIMLTFWLVALLCALAILR) traverse the membrane as a helical segment. Over 155–172 (SKIMTALKEDVQVDLFRD) the chain is Extracellular. A helical transmembrane segment spans residues 173-193 (MTFYVYFSLVLIQLVLSCFSD). Residues 194 to 316 (RSPLFSETIH…KEWNPSLFKV (123 aa)) are Cytoplasmic-facing. Residue Y277 is modified to Phosphotyrosine. Residue S289 is modified to Phosphoserine. The helical transmembrane segment at 317 to 337 (LYKTFGPYFLMSFFFKAIHDL) threads the bilayer. Positions 325–608 (FLMSFFFKAI…LPMVISSIVQ (284 aa)) constitute an ABC transmembrane type-1 1 domain. At 338 to 363 (MMFSGPEILKLLINFVNDTKAPDWQG) the chain is on the extracellular side. The chain crosses the membrane as a helical span at residues 364–384 (YFYTALLFVAACLQTLVLHQY). At 385-440 (FHICFVSGMRIKTAVIGAVYRKALVITNAARKSSTVGEIVNLMSVDAQRFMDLATY) the chain is on the cytoplasmic side. A helical membrane pass occupies residues 441–461 (INMIWSAPLQVILALYLLWRN). Over 462-464 (LGP) the chain is Extracellular. Residues 465–485 (PILAGVAVMVLMVPVNAVMAM) traverse the membrane as a helical segment. Residues 486-547 (KTKTYQVAHM…VLKKSAYLAA (62 aa)) lie on the Cytoplasmic side of the membrane. At K503 the chain carries N6-succinyllysine. The helical transmembrane segment at 548 to 568 (VGTFTWVCTPFLVALCTFAVY) threads the bilayer. Residues 569–590 (VTIDKNNVLDAQKAFVSLALFN) lie on the Extracellular side of the membrane. The chain crosses the membrane as a helical span at residues 591 to 611 (ILRFPLNILPMVISSIVQASV). Residues 612-967 (SLKRLRIFLS…VKLSVYWDYM (356 aa)) lie on the Cytoplasmic side of the membrane. The ABC transporter 1 domain maps to 644–868 (ITVRNATFTW…DGAFAEFLRT (225 aa)). 678-685 (GQVGCGKS) serves as a coordination point for ATP. The interval 871-893 (SAEQEQDPEDNGVTGVSGPGKEA) is disordered. 3 positions are modified to phosphoserine: S905, S915, and S930. Positions 917–938 (SSSYSGDVSRQHNSTAELQKDG) are disordered. Over residues 922-933 (GDVSRQHNSTAE) the composition is skewed to polar residues. The chain crosses the membrane as a helical span at residues 968–988 (KAIGLFISFLSIFLFICNHVA). Residues 975–1256 (SFLSIFLFIC…LVRMSSEMET (282 aa)) enclose the ABC transmembrane type-1 2 domain. At 989-1025 (ALASNYWLSLWTDDPIVNGTQEHTKVRLSVYGALGIS) the chain is on the extracellular side. N-linked (GlcNAc...) asparagine glycosylation occurs at N1006. A helical membrane pass occupies residues 1026 to 1046 (QGIAVFGYSMAVSIGGILASR). The Cytoplasmic segment spans residues 1047–1089 (CLHVDLLHSILRSPMSFFERTPSGNLVNRFSKELDTVDSMIPE). Residues 1090-1110 (VIKMFMGSLFNVIGACIVILL) form a helical membrane-spanning segment. Residue A1111 is a topological domain, extracellular. A helical membrane pass occupies residues 1112 to 1132 (TPIAAIIIPPLGLIYFFVQRF). At 1133-1203 (YVASSRQLKR…VANRWLAVRL (71 aa)) the chain is on the cytoplasmic side. Residues 1204 to 1224 (ECVGNCIVLFAALFAVISRHS) form a helical membrane-spanning segment. At 1225-1226 (LS) the chain is on the extracellular side. The chain crosses the membrane as a helical span at residues 1227-1247 (AGLVGLSVSYSLQVTTYLNWL). Topologically, residues 1248-1531 (VRMSSEMETN…YNMARDAGLV (284 aa)) are cytoplasmic. Positions 1293–1527 (VEFRNYCLRY…RGLFYNMARD (235 aa)) constitute an ABC transporter 2 domain. 1327–1334 (GRTGAGKS) is an ATP binding site.

It belongs to the ABC transporter superfamily. ABCC family. Conjugate transporter (TC 3.A.1.208) subfamily.

Its subcellular location is the cell membrane. It is found in the basolateral cell membrane. It catalyses the reaction ATP + H2O + xenobioticSide 1 = ADP + phosphate + xenobioticSide 2.. The catalysed reaction is an S-substituted glutathione(in) + ATP + H2O = an S-substituted glutathione(out) + ADP + phosphate + H(+). The enzyme catalyses sphing-4-enine 1-phosphate(in) + ATP + H2O = sphing-4-enine 1-phosphate(out) + ADP + phosphate + H(+). It carries out the reaction leukotriene C4(in) + ATP + H2O = leukotriene C4(out) + ADP + phosphate + H(+). It catalyses the reaction 17beta-estradiol 17-O-(beta-D-glucuronate)(in) + ATP + H2O = 17beta-estradiol 17-O-(beta-D-glucuronate)(out) + ADP + phosphate + H(+). The catalysed reaction is daunorubicin(in) + ATP + H2O = daunorubicin(out) + ADP + phosphate + H(+). The enzyme catalyses vincristine(in) + ATP + H2O = vincristine(out) + ADP + phosphate + H(+). It carries out the reaction 2',3'-cGAMP(in) + ATP + H2O = 2',3'-cGAMP(out) + ADP + phosphate + H(+). It catalyses the reaction S-[(2E,6E,10E)-geranylgeranyl]-L-glutathione(in) + ATP + H2O = S-[(2E,6E,10E)-geranylgeranyl]-L-glutathione(out) + ADP + phosphate + H(+). The catalysed reaction is prostaglandin A2-S-(R)-glutathione(in) + ATP + H2O = prostaglandin A2-S-(R)-glutathione(out) + ADP + phosphate + H(+). The enzyme catalyses prostaglandin A2-S-(S)-glutathione(in) + ATP + H2O = prostaglandin A2-S-(S)-glutathione(out) + ADP + phosphate + H(+). Its activity is regulated as follows. MK 571 inhibits sphingosine 1-phosphate and leukotriene C4 export. Mediates export of organic anions and drugs from the cytoplasm. Mediates ATP-dependent transport of glutathione and glutathione conjugates, leukotriene C4, estradiol-17-beta-o-glucuronide, methotrexate, antiviral drugs and other xenobiotics. Confers resistance to anticancer drugs by decreasing accumulation of drug in cells, and by mediating ATP- and GSH-dependent drug export. Hydrolyzes ATP with low efficiency. Catalyzes the export of sphingosine 1-phosphate from mast cells independently of their degranulation. Participates in inflammatory response by allowing export of leukotriene C4 from leukotriene C4-synthesizing cells. Mediates ATP-dependent, GSH-independent cyclic GMP-AMP (cGAMP) export. Thus, by limiting intracellular cGAMP concentrations negatively regulates the cGAS-STING pathway. Exports S-geranylgeranyl-glutathione (GGG) in lymphoid cells and stromal compartments of lymphoid organs. ABCC1 (via extracellular transport) with GGT5 (via GGG catabolism) establish GGG gradients within lymphoid tissues to position P2RY8-positive lymphocytes at germinal centers in lymphoid follicles and restrict their chemotactic transmigration from blood vessels to the bone marrow parenchyma. Mediates basolateral export of GSH-conjugated R- and S-prostaglandin A2 diastereomers in polarized epithelial cells. In Macaca fascicularis (Crab-eating macaque), this protein is Multidrug resistance-associated protein 1.